Here is a 103-residue protein sequence, read N- to C-terminus: Putative double-stranded DNA mimic protein HAPS_1002 (103 aa).

This sequence belongs to the putative dsDNA mimic protein family.

May act as a double-stranded DNA (dsDNA) mimic. Probably regulates the activity of a dsDNA-binding protein. This Glaesserella parasuis serovar 5 (strain SH0165) (Haemophilus parasuis) protein is Putative double-stranded DNA mimic protein HAPS_1002.